A 238-amino-acid polypeptide reads, in one-letter code: Flagellar L-ring protein (238 aa).

A signal peptide spans 1-17 (MKRRLLAAGCAMLLLSG). Residue Cys18 is the site of N-palmitoyl cysteine attachment. Cys18 carries the S-diacylglycerol cysteine lipid modification. The interval 22–50 (RQQPSPVPPVTQPQAYAEPEDTAANPGSL) is disordered.

The protein belongs to the FlgH family. In terms of assembly, the basal body constitutes a major portion of the flagellar organelle and consists of four rings (L,P,S, and M) mounted on a central rod.

Its subcellular location is the cell outer membrane. The protein resides in the bacterial flagellum basal body. Functionally, assembles around the rod to form the L-ring and probably protects the motor/basal body from shearing forces during rotation. The polypeptide is Flagellar L-ring protein (Nitratidesulfovibrio vulgaris (strain DSM 19637 / Miyazaki F) (Desulfovibrio vulgaris)).